Consider the following 2188-residue polypeptide: Glutamate synthase 2 [NADH], chloroplastic (2188 aa).

The transit peptide at 1–30 (MSAAQGLALKLRAAPAAGGVRGEKRRRAAS) directs the protein to the chloroplast. 2 disordered regions span residues 14–40 (APAA…ARPR) and 61–94 (VAPR…PESS). The span at 65 to 80 (ASASRQAEAGAGAGAA) shows a compositional bias: low complexity. The active-site Nucleophile is the cysteine 107. The 405-residue stretch at 107–511 (CGVGFIAELS…PGMMLLVDFE (405 aa)) folds into the Glutamine amidotransferase type-2 domain. 1198–1255 (LAETHQTLVANGLRGRAVLQTDGQMKTGRDVAVACLLGAEEFGFSTAPLITLGCIMMR) is a binding site for FMN. [3Fe-4S] cluster-binding residues include cysteine 1251, cysteine 1257, and cysteine 1262. Residue 1974–1988 (GGGDTGTDCIGTSIR) participates in NAD(+) binding.

Belongs to the glutamate synthase family. As to quaternary structure, monomer. Requires [3Fe-4S] cluster as cofactor. It depends on FAD as a cofactor. FMN serves as cofactor. In terms of tissue distribution, expressed in leaf blades and sheaths.

It localises to the plastid. Its subcellular location is the chloroplast. The enzyme catalyses 2 L-glutamate + NAD(+) = L-glutamine + 2-oxoglutarate + NADH + H(+). The protein operates within amino-acid biosynthesis; L-glutamate biosynthesis via GLT pathway; L-glutamate from 2-oxoglutarate and L-glutamine (NAD(+) route): step 1/1. Its pathway is energy metabolism; nitrogen metabolism. Functionally, involved in glutamate biosynthesis. This is Glutamate synthase 2 [NADH], chloroplastic from Oryza sativa subsp. japonica (Rice).